The following is a 139-amino-acid chain: Trafficking protein particle complex subunit 2-like protein (139 aa).

This sequence belongs to the TRAPP small subunits family. Sedlin subfamily. As to quaternary structure, component of the multisubunit TRAPP (transport protein particle) complex, which includes at least TRAPPC2, TRAPPC2L, TRAPPC3, TRAPPC3L, TRAPPC4, TRAPPC5, TRAPPC8, TRAPPC9, TRAPPC10, TRAPPC11 and TRAPPC12. Interacts with the heterodimer TRAPPC3-TRAPPC6A.

It is found in the cytoplasm. The protein localises to the perinuclear region. The protein resides in the endoplasmic reticulum. It localises to the golgi apparatus. Functionally, may play a role in vesicular transport from endoplasmic reticulum to Golgi. The chain is Trafficking protein particle complex subunit 2-like protein (Trappc2l) from Rattus norvegicus (Rat).